Consider the following 97-residue polypeptide: Small ribosomal subunit protein uS19 (97 aa).

The segment at 74–97 (FSPTRRFGGHPDKKAVKGKIEKQG) is disordered. The span at 82 to 97 (GHPDKKAVKGKIEKQG) shows a compositional bias: basic and acidic residues.

Belongs to the universal ribosomal protein uS19 family.

Functionally, protein S19 forms a complex with S13 that binds strongly to the 16S ribosomal RNA. In Petrotoga mobilis (strain DSM 10674 / SJ95), this protein is Small ribosomal subunit protein uS19.